Consider the following 530-residue polypeptide: Autoinducer-2 kinase (530 aa).

Belongs to the FGGY kinase family.

The protein resides in the cytoplasm. It catalyses the reaction (S)-4,5-dihydroxypentane-2,3-dione + ATP = (2S)-2-hydroxy-3,4-dioxopentyl phosphate + ADP + H(+). Functionally, catalyzes the phosphorylation of autoinducer-2 (AI-2) to phospho-AI-2, which subsequently inactivates the transcriptional regulator LsrR and leads to the transcription of the lsr operon. Phosphorylates the ring-open form of (S)-4,5-dihydroxypentane-2,3-dione (DPD), which is the precursor to all AI-2 signaling molecules, at the C5 position. In Salmonella typhimurium (strain LT2 / SGSC1412 / ATCC 700720), this protein is Autoinducer-2 kinase.